The following is a 477-amino-acid chain: MEWDTVIGLEVHAQLKTKSKLFSGASTAFGATPNSQTSFIDAGLPGVLPVLNEQAIIMAIQFGLAIHGTINDLSVFERKNYFYPDLPKGYQISQYQKPIVTNGYLNIQLGNNLEKTVHIARAHLEEDAGKSLHDAHTDYTGIDLNRAGTPLLEIVTTPCLYSAEEAINYLKTLHQLVRFLGICDGNMQEGSFRCDVNLSIKPKGSSVLGTRTELKNLNSFRFIEKAIAFEQARHQDILESGLSVIQETRLYNPDNNTTQAMRGKENENDYRYFPDPDLLPIHIDKEQIEEIKNNLPDLPEAISKELKNTPSLNDEDINFILSSPDTYQYYKKIKSLCSAADKTIINWLKGQYAAFLNEHTLTFETPPISAKTMAAFLSKIHEKKISSSIAKNIFSMLCAGEEDIDAIIEREGYQQQNDNSALEEIVEQIIKQYPEQVTEYKAGKEKLLAFFIGQAMKQTKGKANPEQINLLLKKHLG.

This sequence belongs to the GatB/GatE family. GatB subfamily. As to quaternary structure, heterotrimer of A, B and C subunits.

It catalyses the reaction L-glutamyl-tRNA(Gln) + L-glutamine + ATP + H2O = L-glutaminyl-tRNA(Gln) + L-glutamate + ADP + phosphate + H(+). It carries out the reaction L-aspartyl-tRNA(Asn) + L-glutamine + ATP + H2O = L-asparaginyl-tRNA(Asn) + L-glutamate + ADP + phosphate + 2 H(+). Allows the formation of correctly charged Asn-tRNA(Asn) or Gln-tRNA(Gln) through the transamidation of misacylated Asp-tRNA(Asn) or Glu-tRNA(Gln) in organisms which lack either or both of asparaginyl-tRNA or glutaminyl-tRNA synthetases. The reaction takes place in the presence of glutamine and ATP through an activated phospho-Asp-tRNA(Asn) or phospho-Glu-tRNA(Gln). This chain is Aspartyl/glutamyl-tRNA(Asn/Gln) amidotransferase subunit B, found in Legionella pneumophila (strain Lens).